Here is a 417-residue protein sequence, read N- to C-terminus: Glutamyl-tRNA reductase (417 aa).

Substrate contacts are provided by residues threonine 49–arginine 52, serine 105, glutamate 110–glutamine 112, and glutamine 116. The active-site Nucleophile is cysteine 50. An NADP(+)-binding site is contributed by glycine 185–isoleucine 190.

The protein belongs to the glutamyl-tRNA reductase family. In terms of assembly, homodimer.

It carries out the reaction (S)-4-amino-5-oxopentanoate + tRNA(Glu) + NADP(+) = L-glutamyl-tRNA(Glu) + NADPH + H(+). The protein operates within porphyrin-containing compound metabolism; protoporphyrin-IX biosynthesis; 5-aminolevulinate from L-glutamyl-tRNA(Glu): step 1/2. In terms of biological role, catalyzes the NADPH-dependent reduction of glutamyl-tRNA(Glu) to glutamate 1-semialdehyde (GSA). This chain is Glutamyl-tRNA reductase, found in Chromobacterium violaceum (strain ATCC 12472 / DSM 30191 / JCM 1249 / CCUG 213 / NBRC 12614 / NCIMB 9131 / NCTC 9757 / MK).